A 384-amino-acid polypeptide reads, in one-letter code: MAFFFNRGRSRQPSDVVRSIKDLLLRLREPSTASKVEDELAKQLSQMKLMVQGTQELEASTDQVHALVQAMLHEDLLYELAVALHNLPFEARKDTQTIFSHILRFKPPHGNSPDPPVISYIVHNRPEIIIELCRGYEHSQSAMPCGTILREALKFDVIAAIILYDQSKEGEPAIRLTEVQPNVPQRGTGVFWRFFHWIDRGTFELSADAFTTFREILTRHKSLVTGYLATNFDYFFAQFNTFLVQSESYVTKRQSIKLLGEILLDRANYSVMMRYVESGENLKLCMKLLRDDRKMVQYEGFHVFKVFVANPDKSVAVQRILINNRDRLLRFLPKFLEDRTDDDQFTDEKSFLVRQIELLPKEPIEPSRSAREPSRSTANTTTVA.

Residues 362–374 (EPIEPSRSAREPS) are compositionally biased toward basic and acidic residues. The disordered stretch occupies residues 362–384 (EPIEPSRSAREPSRSTANTTTVA).

Belongs to the Mo25 family.

Its subcellular location is the cytoplasm. Functionally, required for conidiophore development. The protein is Conidiophore development protein hymA (hymA) of Emericella nidulans (strain FGSC A4 / ATCC 38163 / CBS 112.46 / NRRL 194 / M139) (Aspergillus nidulans).